The chain runs to 88 residues: Putative membrane protein insertion efficiency factor (88 aa).

The segment at 66–88 (DFVPPKKDKNADSEHSCKAHHHH) is disordered. Residues 69–82 (PPKKDKNADSEHSC) show a composition bias toward basic and acidic residues.

This sequence belongs to the UPF0161 family.

It is found in the cell membrane. In terms of biological role, could be involved in insertion of integral membrane proteins into the membrane. This is Putative membrane protein insertion efficiency factor from Listeria monocytogenes serotype 4a (strain HCC23).